Reading from the N-terminus, the 227-residue chain is Cytochrome c oxidase subunit 2 (227 aa).

Over M1–S14 the chain is Mitochondrial intermembrane. Residues P15–M45 form a helical membrane-spanning segment. Over L46 to Q59 the chain is Mitochondrial matrix. Residues E60 to M87 form a helical membrane-spanning segment. Residues D88–L227 lie on the Mitochondrial intermembrane side of the membrane. Cu cation is bound by residues H161, C196, E198, C200, H204, and M207. E198 lines the Mg(2+) pocket. Y218 bears the Phosphotyrosine mark.

The protein belongs to the cytochrome c oxidase subunit 2 family. Component of the cytochrome c oxidase (complex IV, CIV), a multisubunit enzyme composed of 14 subunits. The complex is composed of a catalytic core of 3 subunits MT-CO1, MT-CO2 and MT-CO3, encoded in the mitochondrial DNA, and 11 supernumerary subunits COX4I, COX5A, COX5B, COX6A, COX6B, COX6C, COX7A, COX7B, COX7C, COX8 and NDUFA4, which are encoded in the nuclear genome. The complex exists as a monomer or a dimer and forms supercomplexes (SCs) in the inner mitochondrial membrane with NADH-ubiquinone oxidoreductase (complex I, CI) and ubiquinol-cytochrome c oxidoreductase (cytochrome b-c1 complex, complex III, CIII), resulting in different assemblies (supercomplex SCI(1)III(2)IV(1) and megacomplex MCI(2)III(2)IV(2)). Found in a complex with TMEM177, COA6, COX18, COX20, SCO1 and SCO2. Interacts with TMEM177 in a COX20-dependent manner. Interacts with COX20. Interacts with COX16. Requires Cu cation as cofactor.

Its subcellular location is the mitochondrion inner membrane. The catalysed reaction is 4 Fe(II)-[cytochrome c] + O2 + 8 H(+)(in) = 4 Fe(III)-[cytochrome c] + 2 H2O + 4 H(+)(out). In terms of biological role, component of the cytochrome c oxidase, the last enzyme in the mitochondrial electron transport chain which drives oxidative phosphorylation. The respiratory chain contains 3 multisubunit complexes succinate dehydrogenase (complex II, CII), ubiquinol-cytochrome c oxidoreductase (cytochrome b-c1 complex, complex III, CIII) and cytochrome c oxidase (complex IV, CIV), that cooperate to transfer electrons derived from NADH and succinate to molecular oxygen, creating an electrochemical gradient over the inner membrane that drives transmembrane transport and the ATP synthase. Cytochrome c oxidase is the component of the respiratory chain that catalyzes the reduction of oxygen to water. Electrons originating from reduced cytochrome c in the intermembrane space (IMS) are transferred via the dinuclear copper A center (CU(A)) of subunit 2 and heme A of subunit 1 to the active site in subunit 1, a binuclear center (BNC) formed by heme A3 and copper B (CU(B)). The BNC reduces molecular oxygen to 2 water molecules using 4 electrons from cytochrome c in the IMS and 4 protons from the mitochondrial matrix. The polypeptide is Cytochrome c oxidase subunit 2 (MT-CO2) (Speothos venaticus (Bush dog)).